The sequence spans 185 residues: Large ribosomal subunit protein uL5 (185 aa).

Belongs to the universal ribosomal protein uL5 family. As to quaternary structure, part of the 50S ribosomal subunit; part of the 5S rRNA/L5/L18/L25 subcomplex. Contacts the 5S rRNA and the P site tRNA. Forms a bridge to the 30S subunit in the 70S ribosome.

Its function is as follows. This is one of the proteins that bind and probably mediate the attachment of the 5S RNA into the large ribosomal subunit, where it forms part of the central protuberance. In the 70S ribosome it contacts protein S13 of the 30S subunit (bridge B1b), connecting the 2 subunits; this bridge is implicated in subunit movement. Contacts the P site tRNA; the 5S rRNA and some of its associated proteins might help stabilize positioning of ribosome-bound tRNAs. In Parabacteroides distasonis (strain ATCC 8503 / DSM 20701 / CIP 104284 / JCM 5825 / NCTC 11152), this protein is Large ribosomal subunit protein uL5.